Reading from the N-terminus, the 298-residue chain is Cyclin-dependent kinase 2 (298 aa).

Position 1 is an N-acetylmethionine (M1). Residues 4–286 (FQKVEKIGEG…AKAALAHPFF (283 aa)) enclose the Protein kinase domain. K6 carries the N6-acetyllysine modification. 10-18 (IGEGTYGVV) contributes to the ATP binding site. T14 carries the phosphothreonine modification. Y15 is subject to Phosphotyrosine; by WEE1. Y19 is subject to Phosphotyrosine. ATP contacts are provided by residues K33, 81 to 83 (EFL), and D86. The active-site Proton acceptor is the D127. ATP-binding positions include 129 to 132 (KPQN) and D145. Mg(2+) is bound by residues N132 and D145. T160 carries the phosphothreonine; by CAK and CCRK modification.

This sequence belongs to the protein kinase superfamily. CMGC Ser/Thr protein kinase family. CDC2/CDKX subfamily. As to quaternary structure, found in a complex with CABLES1, CCNA1 and CCNE1. Interacts with CABLES1. Interacts with UHRF2. Part of a complex consisting of UHRF2, CDK2 and CCNE1. Interacts with the Speedy/Ringo proteins SPDYA and SPDYC. Interaction with SPDYA promotes kinase activation via a conformation change that alleviates obstruction of the substrate-binding cleft by the T-loop. Found in a complex with both SPDYA and CDKN1B/KIP1. Binds to RB1 and CDK7. Binding to CDKN1A (p21) leads to CDK2/cyclin E inactivation at the G1-S phase DNA damage checkpoint, thereby arresting cells at the G1-S transition during DNA repair. Associated with PTPN6 and beta-catenin/CTNNB1. Interacts with CACUL1. May interact with CEP63. Interacts with ANKRD17. Interacts with CEBPA (when phosphorylated). Forms a ternary complex with CCNA2 and CDKN1B; CDKN1B inhibits the kinase activity of CDK2 through conformational rearrangements. Interacts with cyclins A, B1, B3, D, or E. Interacts with CDK2AP2. Mg(2+) serves as cofactor. Phosphorylated at Thr-160 by CDK7 in a CAK complex. Phosphorylation at Thr-160 promotes kinase activity, whereas phosphorylation at Tyr-15 by WEE1 reduces slightly kinase activity. Phosphorylated on Thr-14 and Tyr-15 during S and G2 phases before being dephosphorylated by CDC25A. In terms of processing, nitrosylated after treatment with nitric oxide (DETA-NO).

It is found in the cytoplasm. The protein resides in the cytoskeleton. It localises to the microtubule organizing center. The protein localises to the centrosome. Its subcellular location is the nucleus. It is found in the cajal body. The protein resides in the endosome. The enzyme catalyses L-seryl-[protein] + ATP = O-phospho-L-seryl-[protein] + ADP + H(+). It carries out the reaction L-threonyl-[protein] + ATP = O-phospho-L-threonyl-[protein] + ADP + H(+). With respect to regulation, phosphorylation at Thr-14 or Tyr-15 inactivates the enzyme, while phosphorylation at Thr-160 activates it. Inhibited by 1,25-dihydroxyvitamin D(3) (1,25-(OH)(2)D(3)), AG-024322, N-(4-Piperidinyl)-4-(2,6-dichlorobenzoylamino)-1H-pyrazole-3-carboxamide (AT7519), R547 (Ro-4584820), purine, pyrimidine and pyridine derivatives, 2-aminopyrimidines, paullones, thiazo derivatives, macrocyclic quinoxalin-2-one, pyrazolo[1,5-a]-1,3,5-triazine, pyrazolo[1,5-a]pyrimidine, 2-(1-ethyl-2-hydroxyethylamino)-6-benzylamino-9-isopropylpurine (roscovitine, seliciclib and CYC202), SNS-032 (BMS-387032), triazolo[1,5-a]pyrimidines, staurosporine and olomoucine. Stimulated by MYC. Inactivated by CDKN1A (p21). Its function is as follows. Serine/threonine-protein kinase involved in the control of the cell cycle; essential for meiosis, but dispensable for mitosis. Phosphorylates CABLES1, CTNNB1, CDK2AP2, ERCC6, NBN, USP37, p53/TP53, NPM1, CDK7, RB1, BRCA2, MYC, NPAT, EZH2. Triggers duplication of centrosomes and DNA. Acts at the G1-S transition to promote the E2F transcriptional program and the initiation of DNA synthesis, and modulates G2 progression; controls the timing of entry into mitosis/meiosis by controlling the subsequent activation of cyclin B/CDK1 by phosphorylation, and coordinates the activation of cyclin B/CDK1 at the centrosome and in the nucleus. Crucial role in orchestrating a fine balance between cellular proliferation, cell death, and DNA repair in embryonic stem cells (ESCs). Activity of CDK2 is maximal during S phase and G2; activated by interaction with cyclin E during the early stages of DNA synthesis to permit G1-S transition, and subsequently activated by cyclin A2 (cyclin A1 in germ cells) during the late stages of DNA replication to drive the transition from S phase to mitosis, the G2 phase. EZH2 phosphorylation promotes H3K27me3 maintenance and epigenetic gene silencing. Cyclin E/CDK2 prevents oxidative stress-mediated Ras-induced senescence by phosphorylating MYC. Involved in G1-S phase DNA damage checkpoint that prevents cells with damaged DNA from initiating mitosis; regulates homologous recombination-dependent repair by phosphorylating BRCA2, this phosphorylation is low in S phase when recombination is active, but increases as cells progress towards mitosis. In response to DNA damage, double-strand break repair by homologous recombination a reduction of CDK2-mediated BRCA2 phosphorylation. Involved in regulation of telomere repair by mediating phosphorylation of NBN. Phosphorylation of RB1 disturbs its interaction with E2F1. NPM1 phosphorylation by cyclin E/CDK2 promotes its dissociates from unduplicated centrosomes, thus initiating centrosome duplication. Cyclin E/CDK2-mediated phosphorylation of NPAT at G1-S transition and until prophase stimulates the NPAT-mediated activation of histone gene transcription during S phase. Required for vitamin D-mediated growth inhibition by being itself inactivated. Involved in the nitric oxide- (NO) mediated signaling in a nitrosylation/activation-dependent manner. USP37 is activated by phosphorylation and thus triggers G1-S transition. CTNNB1 phosphorylation regulates insulin internalization. Phosphorylates FOXP3 and negatively regulates its transcriptional activity and protein stability. Phosphorylates ERCC6 which is essential for its chromatin remodeling activity at DNA double-strand breaks. Acts as a regulator of the phosphatidylinositol 3-kinase/protein kinase B signal transduction by mediating phosphorylation of the C-terminus of protein kinase B (PKB/AKT1 and PKB/AKT2), promoting its activation. This chain is Cyclin-dependent kinase 2 (CDK2), found in Homo sapiens (Human).